Consider the following 355-residue polypeptide: Guanine nucleotide-binding protein G(i) subunit alpha (355 aa).

A lipid anchor (N-myristoyl glycine) is attached at Gly-2. Cys-3 is lipidated: S-palmitoyl cysteine. Residues 33-355 form the G-alpha domain; sequence REVKLLLLGA…KNNLKDCGLF (323 aa). The interval 36–49 is G1 motif; the sequence is KLLLLGAGESGKST. GTP is bound by residues 41 to 48, 176 to 182, 201 to 205, 270 to 273, and Ala-327; these read GAGESGKS, LRTRVKT, DVGGQ, and NKKD. Residues Ser-48 and Thr-182 each contribute to the Mg(2+) site. The tract at residues 174–182 is G2 motif; it reads DVLRTRVKT. Positions 197–206 are G3 motif; the sequence is FKLFDVGGQR. A G4 motif region spans residues 266–273; that stretch reads ILFLNKKD. The tract at residues 325–330 is G5 motif; the sequence is TCATDT.

The protein belongs to the G-alpha family. G(i/o/t/z) subfamily. As to quaternary structure, g proteins are composed of 3 units; alpha, beta and gamma. The alpha chain contains the guanine nucleotide binding site.

Functionally, guanine nucleotide-binding proteins (G proteins) are involved as modulators or transducers in various transmembrane signaling systems. This is Guanine nucleotide-binding protein G(i) subunit alpha from Homarus americanus (American lobster).